A 174-amino-acid chain; its full sequence is ATP synthase subunit delta (174 aa).

The protein belongs to the ATPase delta chain family. F-type ATPases have 2 components, F(1) - the catalytic core - and F(0) - the membrane proton channel. F(1) has five subunits: alpha(3), beta(3), gamma(1), delta(1), epsilon(1). F(0) has three main subunits: a(1), b(2) and c(10-14). The alpha and beta chains form an alternating ring which encloses part of the gamma chain. F(1) is attached to F(0) by a central stalk formed by the gamma and epsilon chains, while a peripheral stalk is formed by the delta and b chains.

It localises to the cell inner membrane. In terms of biological role, f(1)F(0) ATP synthase produces ATP from ADP in the presence of a proton or sodium gradient. F-type ATPases consist of two structural domains, F(1) containing the extramembraneous catalytic core and F(0) containing the membrane proton channel, linked together by a central stalk and a peripheral stalk. During catalysis, ATP synthesis in the catalytic domain of F(1) is coupled via a rotary mechanism of the central stalk subunits to proton translocation. Its function is as follows. This protein is part of the stalk that links CF(0) to CF(1). It either transmits conformational changes from CF(0) to CF(1) or is implicated in proton conduction. The polypeptide is ATP synthase subunit delta (Francisella tularensis subsp. mediasiatica (strain FSC147)).